The sequence spans 333 residues: Tetraacyldisaccharide 4'-kinase (333 aa).

55–62 (TAGGNGKT) is an ATP binding site.

This sequence belongs to the LpxK family.

It carries out the reaction a lipid A disaccharide + ATP = a lipid IVA + ADP + H(+). The protein operates within glycolipid biosynthesis; lipid IV(A) biosynthesis; lipid IV(A) from (3R)-3-hydroxytetradecanoyl-[acyl-carrier-protein] and UDP-N-acetyl-alpha-D-glucosamine: step 6/6. In terms of biological role, transfers the gamma-phosphate of ATP to the 4'-position of a tetraacyldisaccharide 1-phosphate intermediate (termed DS-1-P) to form tetraacyldisaccharide 1,4'-bis-phosphate (lipid IVA). This Pectobacterium carotovorum subsp. carotovorum (strain PC1) protein is Tetraacyldisaccharide 4'-kinase.